Consider the following 197-residue polypeptide: GTP cyclohydrolase 1 (197 aa).

Residues C85, H88, and C156 each contribute to the Zn(2+) site.

The protein belongs to the GTP cyclohydrolase I family. In terms of assembly, toroid-shaped homodecamer, composed of two pentamers of five dimers.

It catalyses the reaction GTP + H2O = 7,8-dihydroneopterin 3'-triphosphate + formate + H(+). It participates in cofactor biosynthesis; 7,8-dihydroneopterin triphosphate biosynthesis; 7,8-dihydroneopterin triphosphate from GTP: step 1/1. This chain is GTP cyclohydrolase 1, found in Mesorhizobium japonicum (strain LMG 29417 / CECT 9101 / MAFF 303099) (Mesorhizobium loti (strain MAFF 303099)).